The chain runs to 83 residues: Defensin-like protein 47 (83 aa).

The first 27 residues, 1-27 (MGSTKTLVTCFLVIILAVSLPNNNVLA), serve as a signal peptide directing secretion. 4 disulfide bridges follow: cysteine 40-cysteine 81, cysteine 44-cysteine 68, cysteine 53-cysteine 79, and cysteine 57-cysteine 80.

Belongs to the DEFL family.

Its subcellular location is the secreted. The sequence is that of Defensin-like protein 47 from Arabidopsis thaliana (Mouse-ear cress).